The primary structure comprises 504 residues: Ectoine/proline transporter ProP (504 aa).

A run of 11 helical transmembrane segments spans residues 41 to 61, 71 to 91, 118 to 138, 169 to 189, 207 to 227, 272 to 292, 309 to 329, 337 to 357, 362 to 382, 399 to 419, and 430 to 450; these read FMEWYDFGIYGYLTVTMTAVF, LLAVMFGFAVSYLVRPLGGLV, LIGLLPTAASIGAWALVLLYL, FFGAFLDMGSYLGFAAGASVV, DFGWRIPFLTAIPLGIIAVYL, LLIGIAIVAATNTAGYALTSY, AAVTVPILVVMSLLLPFVGMW, PVYATAVAATLILMVPAFLIM, IGAVLIALSMVAIPTGLYVAL, GMGISYNISVSLFGGTTPLIT, and IVPALYIMFFSAIAGVALLFM. Positions 477–504 are disordered; the sequence is NQDEDPNIDLSHMPFPDEENVGAEKQNA.

Belongs to the major facilitator superfamily.

It localises to the cell membrane. Its activity is regulated as follows. Uptake is activated by osmotic stress. Inhibited by CCCP. Its function is as follows. Involved in the uptake of osmoprotectants. Can transport ectoine and proline. Protons are probably the coupling ions. This chain is Ectoine/proline transporter ProP, found in Corynebacterium glutamicum (strain ATCC 13032 / DSM 20300 / JCM 1318 / BCRC 11384 / CCUG 27702 / LMG 3730 / NBRC 12168 / NCIMB 10025 / NRRL B-2784 / 534).